The chain runs to 308 residues: Elongation factor Ts (308 aa).

The segment at 80–83 (TDFV) is involved in Mg(2+) ion dislocation from EF-Tu.

Belongs to the EF-Ts family.

The protein localises to the cytoplasm. In terms of biological role, associates with the EF-Tu.GDP complex and induces the exchange of GDP to GTP. It remains bound to the aminoacyl-tRNA.EF-Tu.GTP complex up to the GTP hydrolysis stage on the ribosome. The protein is Elongation factor Ts of Rhodopseudomonas palustris (strain BisB18).